The primary structure comprises 527 residues: MLPLTEENKHVAQLLFSSGTCPRCILRFCGVDLPAPYKHPSKELLNELQKFLEPEKPELILEAPNPPLKKIRLHEDGIDNLSEDGKEGVSVTEDESMAEKPSKLRVCNVCLGILQEFCEKGFITKVCQKVEASGFEFTSVVLSVSFPPQLSVREHAAWLLVKQEMGKQSLSLGRNDVVQLKEAYKWITHPLFSEELGVPTDGKSLFEVSVVFAHPETAEDCHFLGEVCRDCFKPAKNKQSVFTRMAVLKALSKIKEEDFLGQFPCPPNSPKTVCTVLEVECTHGAVFVAGRYNKYSRNLPQTPWIIDGERKMESSVEELISDHLLAVFRAESFNFSSSGREDVDVRTLGNGRPFAVELLNPHRVHFTSQEMKELQQTINKSSDKIQVRDLQLVTREAIGHMKEGEEEKTKTYSALIWTNRAIQKKDIGFLDDLKDLKIDQKTPLRVLHRRPLAVRTRAIHSMKTHYLDEHHFRLHLKTQAGTYIKEFVHGDFGRTKPNLGSLMNVTADILELDVESVDVDWPPALDD.

Positions 21 and 24 each coordinate Zn(2+). Residues 42 to 87 are a coiled coil; sequence KELLNELQKFLEPEKPELILEAPNPPLKKIRLHEDGIDNLSEDGKE. Position 82 is a phosphoserine (serine 82). Residues cysteine 107 and cysteine 110 each contribute to the Zn(2+) site. The segment at 302–315 is RNA binding forefinger loop; that stretch reads TPWIIDGERKMESS. Aspartate 342 serves as the catalytic Nucleophile. Residues 440–455 are RNA binding thumb loop; sequence QKTPLRVLHRRPLAVR.

The protein belongs to the pseudouridine synthase Pus10 family. As to quaternary structure, interacts with components of the microprocessor complex DROSHA and DGCR8. Proteolytically cleaved during TRAIL-induced cell death. Cleaved, in vitro, either by caspase-3 (CASP3) or caspase-8 (CASP8).

It is found in the nucleus. The protein resides in the cytoplasm. It localises to the mitochondrion. The catalysed reaction is uridine(55) in tRNA = pseudouridine(55) in tRNA. The enzyme catalyses uridine(54) in tRNA = pseudouridine(54) in tRNA. Its function is as follows. Protein with different functions depending on its subcellular location: involved in miRNA processing in the nucleus and acts as a tRNA pseudouridylate synthase in the cytoplasm. In the cytoplasm, acts as a pseudouridylate synthase by catalyzing synthesis of pseudouridine(54) and pseudouridine(55) from uracil-54 and uracil-55, respectively, in the psi GC loop of a subset of tRNAs. tRNA pseudouridylate synthase activity is enhanced by the presence of 1-methyladenosine at position 53-61 of tRNAs. Does not show tRNA pseudouridylate synthase activity in the nucleus. In the nucleus, promotes primary microRNAs (pri-miRNAs) processing independently of its RNA pseudouridylate synthase activity. Binds pri-miRNAs. Modulator of TRAIL/TNFSF10-induced cell death via activation of procaspase-8 and BID cleavage. Required for the progression of the apoptotic signal through intrinsic mitochondrial cell death. The protein is tRNA pseudouridine synthase Pus10 of Mus musculus (Mouse).